Here is a 285-residue protein sequence, read N- to C-terminus: Release factor glutamine methyltransferase (285 aa).

S-adenosyl-L-methionine contacts are provided by residues 119-123 (GTGSG), Glu142, Trp175, and Asn191. 191–194 (NPPY) contributes to the substrate binding site.

The protein belongs to the protein N5-glutamine methyltransferase family. PrmC subfamily.

It carries out the reaction L-glutaminyl-[peptide chain release factor] + S-adenosyl-L-methionine = N(5)-methyl-L-glutaminyl-[peptide chain release factor] + S-adenosyl-L-homocysteine + H(+). In terms of biological role, methylates the class 1 translation termination release factors RF1/PrfA and RF2/PrfB on the glutamine residue of the universally conserved GGQ motif. In Burkholderia pseudomallei (strain K96243), this protein is Release factor glutamine methyltransferase.